A 208-amino-acid polypeptide reads, in one-letter code: Probable DNA-3-methyladenine glycosylase (208 aa).

Belongs to the DNA glycosylase MPG family.

It is found in the nucleus. It catalyses the reaction Hydrolysis of alkylated DNA, releasing 3-methyladenine, 3-methylguanine, 7-methylguanine and 7-methyladenine.. Its function is as follows. Hydrolysis of the deoxyribose N-glycosidic bond to excise 3-methyladenine, and 7-methylguanine from the damaged DNA polymer formed by alkylation lesions. The chain is Probable DNA-3-methyladenine glycosylase from Encephalitozoon cuniculi (strain GB-M1) (Microsporidian parasite).